A 1357-amino-acid polypeptide reads, in one-letter code: DNA-directed RNA polymerase subunit beta (1357 aa).

It belongs to the RNA polymerase beta chain family. The RNAP catalytic core consists of 2 alpha, 1 beta, 1 beta' and 1 omega subunit. When a sigma factor is associated with the core the holoenzyme is formed, which can initiate transcription.

The enzyme catalyses RNA(n) + a ribonucleoside 5'-triphosphate = RNA(n+1) + diphosphate. In terms of biological role, DNA-dependent RNA polymerase catalyzes the transcription of DNA into RNA using the four ribonucleoside triphosphates as substrates. This chain is DNA-directed RNA polymerase subunit beta, found in Nitrosospira multiformis (strain ATCC 25196 / NCIMB 11849 / C 71).